The following is a 132-amino-acid chain: Small ribosomal subunit protein uS8 (132 aa).

Belongs to the universal ribosomal protein uS8 family. In terms of assembly, part of the 30S ribosomal subunit. Contacts proteins S5 and S12.

One of the primary rRNA binding proteins, it binds directly to 16S rRNA central domain where it helps coordinate assembly of the platform of the 30S subunit. This Ehrlichia ruminantium (strain Welgevonden) protein is Small ribosomal subunit protein uS8.